The sequence spans 592 residues: Thiol:disulfide interchange protein DsbD (592 aa).

Positions 1 to 19 are cleaved as a signal peptide; the sequence is MKLIASFSIFMLMSIWSFA. Intrachain disulfides connect Cys130–Cys136 and Cys204–Cys326. The next 8 helical transmembrane spans lie at 186–206, 229–249, 265–285, 318–338, 345–365, 379–399, 406–426, and 440–460; these read IWVL…PCVF, FVLS…LGLV, IILG…FGAW, ISGL…LLYI, LLGF…LILF, WMNI…LMFV, MATD…FYVM, and ALVI…TIFG. The Thioredoxin domain occupies 443 to 592; it reads IFIGLFASAM…AFAAHAKNIL (150 aa). Cysteines 508 and 511 form a disulfide.

It belongs to the thioredoxin family. DsbD subfamily.

It localises to the cell inner membrane. The catalysed reaction is [protein]-dithiol + NAD(+) = [protein]-disulfide + NADH + H(+). The enzyme catalyses [protein]-dithiol + NADP(+) = [protein]-disulfide + NADPH + H(+). Functionally, required to facilitate the formation of correct disulfide bonds in some periplasmic proteins and for the assembly of the periplasmic c-type cytochromes. Acts by transferring electrons from cytoplasmic thioredoxin to the periplasm. This transfer involves a cascade of disulfide bond formation and reduction steps. This chain is Thiol:disulfide interchange protein DsbD, found in Pseudoalteromonas atlantica (strain T6c / ATCC BAA-1087).